Here is a 255-residue protein sequence, read N- to C-terminus: Bouquet formation protein 3 (255 aa).

The next 8 membrane-spanning stretches (helical) occupy residues 13 to 33 (IKVS…NYHL), 48 to 68 (IPYW…LLLQ), 72 to 94 (LGYG…YYLT), 99 to 116 (IAWA…ARCF), 132 to 152 (YSVS…LNYI), 172 to 192 (SLVA…GYVI), 205 to 225 (SLFL…SILF), and 235 to 255 (VVGA…ALSL).

The protein resides in the endoplasmic reticulum membrane. It localises to the nucleus inner membrane. Connects telomeres to the nuclear envelop (NE) during both vegetative growth and meiosis. This connection ensures clustering of telomeres to the spindle pole body (SPB) when cells enter meiotic prophase. This is Bouquet formation protein 3 (bqt3) from Schizosaccharomyces pombe (strain 972 / ATCC 24843) (Fission yeast).